Here is a 380-residue protein sequence, read N- to C-terminus: SAM and SH3 domain-containing protein 3 (380 aa).

The interval M1–W76 is disordered. Residues L22–V41 show a composition bias toward low complexity. Phosphoserine occurs at positions 27, 34, and 42. T61 carries the post-translational modification Phosphothreonine. S97 is subject to Phosphoserine. Disordered stretches follow at residues E98–F174, V237–T256, and T318–P380. T103 bears the Phosphothreonine mark. S110 bears the Phosphoserine mark. A Phosphothreonine modification is found at T112. S113 bears the Phosphoserine mark. Y116 is subject to Phosphotyrosine. A Phosphoserine modification is found at S120. The span at R143–C152 shows a compositional bias: polar residues. Over residues S153–E164 the composition is skewed to low complexity. Positions P173 to E234 constitute an SH3 domain. Residues R241 to K255 are compositionally biased toward basic residues. The region spanning P252–Y316 is the SAM domain. The residue at position 318 (T318) is a Phosphothreonine. Acidic residues predominate over residues T318–A327. S320 carries the phosphoserine modification.

Functionally, may function as a signaling adapter protein in lymphocytes. In Homo sapiens (Human), this protein is SAM and SH3 domain-containing protein 3 (SASH3).